The primary structure comprises 40 residues: Protamine-2 (40 aa).

Residues 1 to 40 (MPPRRKRVSSAPRRRRRTYRRTTAHKHQERPVHRRRRRRH) form a disordered region.

In terms of tissue distribution, testis.

The protein resides in the nucleus. The protein localises to the chromosome. Its function is as follows. Protamines substitute for histones in the chromatin of sperm during the haploid phase of spermatogenesis. They compact sperm DNA into a highly condensed, stable and inactive complex. This chain is Protamine-2 (PBP2), found in Bufo japonicus (Japanese common toad).